Here is a 130-residue protein sequence, read N- to C-terminus: Small ribosomal subunit protein uS8 (130 aa).

The protein belongs to the universal ribosomal protein uS8 family. Part of the 30S ribosomal subunit.

One of the primary rRNA binding proteins, it binds directly to 16S rRNA central domain where it helps coordinate assembly of the platform of the 30S subunit. In Natronomonas pharaonis (strain ATCC 35678 / DSM 2160 / CIP 103997 / JCM 8858 / NBRC 14720 / NCIMB 2260 / Gabara) (Halobacterium pharaonis), this protein is Small ribosomal subunit protein uS8.